A 109-amino-acid chain; its full sequence is Arminin 6560 (109 aa).

The first 21 residues, 1–21, serve as a signal peptide directing secretion; it reads MKCLFGFLFIMLVAFLQDVHG. Residues 22-77 constitute a propeptide that is removed on maturation; it reads VDSCIGKPCKVKGEDMKDIKEKKIEDIKEEIKNVKKEIFEDVDDELLDDNIRDDKI. Residue isoleucine 106 is modified to Isoleucine amide.

Belongs to the arminin family. As to expression, expressed in the ectodermal epithelium.

The protein resides in the secreted. The protein localises to the target cell membrane. Antimicrobial peptide with a broad-spectrum antimicrobial activity. Keeps its antibacterial activity under a wide range of salt concentrations that mimic physiological conditions of human blood, which is surprising, since Hydra is an obligate freshwater animal with nearly no salt tolerance. Does not affect red blood cells. This is Arminin 6560 from Hydra vulgaris (Hydra).